The sequence spans 257 residues: Snake venom serine protease BITS01A (257 aa).

Residues 1 to 18 (MVLIRVIANLLILQVSYA) form the signal peptide. The propeptide occupies 19–24 (QKSSEL). Residues 25 to 248 (VVGGDECDIN…YLPWIQSIIA (224 aa)) form the Peptidase S1 domain. Cystine bridges form between Cys-31/Cys-162, Cys-49/Cys-65, Cys-97/Cys-255, Cys-141/Cys-209, Cys-173/Cys-188, and Cys-199/Cys-224. The Charge relay system role is filled by His-64. Asn-101 carries an N-linked (GlcNAc...) asparagine glycan. Asp-109 (charge relay system) is an active-site residue. N-linked (GlcNAc...) asparagine glycans are attached at residues Asn-121, Asn-153, and Asn-169. The active-site Charge relay system is Ser-203. 2 N-linked (GlcNAc...) asparagine glycosylation sites follow: Asn-210 and Asn-250.

The protein belongs to the peptidase S1 family. Snake venom subfamily. In terms of assembly, monomer. Expressed by the venom gland.

It is found in the secreted. Its function is as follows. Snake venom serine protease that may act in the hemostasis system of the prey. This is Snake venom serine protease BITS01A from Bothrops insularis (Golden lancehead).